The primary structure comprises 843 residues: Glycogen phosphorylase, brain form (843 aa).

Residue Ala-2 is modified to N-acetylalanine. Ser-15 bears the Phosphoserine; by PHK; in form phosphorylase A mark. Asp-43, Tyr-197, and Arg-310 together coordinate AMP. At Tyr-197 the chain carries Phosphotyrosine. A Phosphotyrosine modification is found at Tyr-473. Residue Lys-569 participates in pyridoxal 5'-phosphate binding. A pyridoxal 5'-phosphate region spans residues 677-678 (TG). N6-(pyridoxal phosphate)lysine is present on Lys-681.

This sequence belongs to the glycogen phosphorylase family. As to quaternary structure, homodimer. Dimers associate into a tetramer to form the enzymatically active phosphorylase A. Pyridoxal 5'-phosphate is required as a cofactor. Post-translationally, phosphorylated. Phosphorylation of Ser-15 converts phosphorylase B (unphosphorylated) to phosphorylase A.

The enzyme catalyses [(1-&gt;4)-alpha-D-glucosyl](n) + phosphate = [(1-&gt;4)-alpha-D-glucosyl](n-1) + alpha-D-glucose 1-phosphate. Activity of phosphorylase is controlled both by allosteric means (through the non-covalent binding of metabolites) and by covalent modification. Thus AMP allosterically activates, whereas ATP, ADP, and glucose-6-phosphate allosterically inhibit, phosphorylase B. Activated upon phosphorylation. Functionally, glycogen phosphorylase that regulates glycogen mobilization. Phosphorylase is an important allosteric enzyme in carbohydrate metabolism. Enzymes from different sources differ in their regulatory mechanisms and in their natural substrates. However, all known phosphorylases share catalytic and structural properties. This chain is Glycogen phosphorylase, brain form, found in Homo sapiens (Human).